A 1627-amino-acid chain; its full sequence is DNA topoisomerase 2-beta (1627 aa).

ATP contacts are provided by residues Asn-117, Asn-146, Ser-174–Asn-176, and Gly-187–Lys-194. Residues Lys-368–Lys-370 form an interaction with DNA region. Residue Gln-402–Lys-404 coordinates ATP. The Toprim domain maps to Cys-481–Glu-598. The Mg(2+) site is built by Glu-487, Asp-567, and Asp-569. Positions Ile-741–Leu-1194 constitute a Topo IIA-type catalytic domain. Tyr-831 serves as the catalytic O-(5'-phospho-DNA)-tyrosine intermediate. The tract at residues Lys-1016 to Ser-1025 is interaction with DNA. Disordered stretches follow at residues Ala-1115 to Ser-1144, Lys-1224 to Val-1248, Glu-1283 to Leu-1365, and Asp-1378 to Asn-1627. The span at Asn-1131–Ser-1144 shows a compositional bias: low complexity. Residues Thr-1296–Lys-1305 show a composition bias toward polar residues. Over residues Pro-1339 to Ser-1349 the composition is skewed to basic and acidic residues. Acidic residues-rich tracts occupy residues Lys-1381 to Ala-1392 and Arg-1412 to Asp-1428. 2 stretches are compositionally biased toward basic and acidic residues: residues Pro-1436–Gln-1448 and Lys-1462–Asp-1471. 2 stretches are compositionally biased toward basic residues: residues Gly-1542–Thr-1552 and Lys-1566–Lys-1578. Acidic residues predominate over residues Glu-1616–Asn-1627.

Belongs to the type II topoisomerase family. In terms of assembly, homodimer. The cofactor is Mg(2+). Requires Mn(2+) as cofactor. It depends on Ca(2+) as a cofactor.

The protein localises to the nucleus. It localises to the nucleolus. The protein resides in the nucleoplasm. The catalysed reaction is ATP-dependent breakage, passage and rejoining of double-stranded DNA.. Key decatenating enzyme that alters DNA topology by binding to two double-stranded DNA molecules, generating a double-stranded break in one of the strands, passing the intact strand through the broken strand, and religating the broken strand. Plays a role in B-cell differentiation. The sequence is that of DNA topoisomerase 2-beta (TOP2B) from Gallus gallus (Chicken).